Here is a 433-residue protein sequence, read N- to C-terminus: uncharacterized protein (433 aa).

The chain crosses the membrane as a helical span at residues 36–58 (YYYYVQLAFKMLVGVLKNLPVVY). The disordered stretch occupies residues 169–433 (VRVPSRDLQP…GEGRDLPEDN (265 aa)). 2 stretches are compositionally biased toward acidic residues: residues 216 to 227 (GEPGENGDESDE) and 234 to 254 (GDEDAAQSEQNNDDGMDYESD). Basic and acidic residues-rich tracts occupy residues 265–280 (EPDRRHDAEAGERGSE), 354–364 (GGRRPARRDSP), and 422–433 (RRGEGRDLPEDN).

The protein resides in the host membrane. This is an uncharacterized protein from Psittacid herpesvirus 1 (isolate Amazon parrot/-/97-0001/1997) (PsHV-1).